The sequence spans 137 residues: Fibroblast growth factor 2 (137 aa).

N27 lines the heparin pocket. Phosphotyrosine; by TEC is present on Y73. Residue K86 forms a Glycyl lysine isopeptide (Lys-Gly) (interchain with G-Cter in SUMO1) linkage. A heparin-binding region spans residues 119–135 (KRTGQYKLGSKTGPGQK).

The protein belongs to the heparin-binding growth factors family. In terms of assembly, monomer. Homodimer. Interacts with FGFR1, FGFR2, FGFR3 and FGFR4. Affinity between fibroblast growth factors (FGFs) and their receptors is increased by heparan sulfate glycosaminoglycans that function as coreceptors. Interacts with CSPG4, FGFBP1 and TEC. Found in a complex with FGFBP1, FGF1 and FGF2. Interacts with FGFBP3. Interacts with integrin ITGAV:ITGB3; the interaction is required for FGF2 signaling. Interacts with SNORC (via the extracellular domain). Interacts with glypican GPC3. Post-translationally, phosphorylation at Tyr-73 regulates FGF2 unconventional secretion.

It is found in the secreted. The protein resides in the nucleus. In terms of biological role, acts as a ligand for FGFR1, FGFR2, FGFR3 and FGFR4. Also acts as an integrin ligand which is required for FGF2 signaling. Binds to integrin ITGAV:ITGB3. Plays an important role in the regulation of cell survival, cell division, cell differentiation and cell migration. Functions as a potent mitogen in vitro. Can induce angiogenesis. Mediates phosphorylation of ERK1/2 and thereby promotes retinal lens fiber differentiation. In Oryctolagus cuniculus (Rabbit), this protein is Fibroblast growth factor 2 (FGF2).